The following is a 144-amino-acid chain: Bacilliredoxin BCE_4227 (144 aa).

Belongs to the bacilliredoxin family.

This is Bacilliredoxin BCE_4227 from Bacillus cereus (strain ATCC 10987 / NRS 248).